A 314-amino-acid polypeptide reads, in one-letter code: Mitochondrial 2-oxoglutarate/malate carrier protein (314 aa).

N-acetylalanine is present on A2. Position 6 is a phosphoserine (S6). 3 Solcar repeats span residues 23-108 (VKFL…LFER), 117-208 (PGFL…SKQF), and 217-306 (DNIL…MNKA). A helical membrane pass occupies residues 24 to 42 (KFLFGGLAGMGATVFVQPL). N6-succinyllysine is present on K57. K73 carries the N6-acetyllysine modification. The chain crosses the membrane as a helical span at residues 83–101 (GLSAGLLRQATYTTTRLGI). Y102 carries the phosphotyrosine modification. Transmembrane regions (helical) follow at residues 119–140 (FLLK…GTPA), 183–202 (GCIP…LASY), and 222–240 (HFCA…SMPV). K256 is subject to N6-acetyllysine. A helical transmembrane segment spans residues 281–300 (GFTPYYARLGPHTVLTFIFL).

The protein belongs to the mitochondrial carrier (TC 2.A.29) family. In terms of assembly, interacts with SMIM26.

The protein resides in the mitochondrion inner membrane. It carries out the reaction (S)-malate(in) + 2-oxoglutarate(out) = (S)-malate(out) + 2-oxoglutarate(in). The catalysed reaction is malonate(in) + 2-oxoglutarate(out) = malonate(out) + 2-oxoglutarate(in). The enzyme catalyses succinate(in) + 2-oxoglutarate(out) = succinate(out) + 2-oxoglutarate(in). It catalyses the reaction maleate(in) + 2-oxoglutarate(out) = maleate(out) + 2-oxoglutarate(in). It carries out the reaction oxaloacetate(in) + 2-oxoglutarate(out) = oxaloacetate(out) + 2-oxoglutarate(in). Functionally, catalyzes the transport of 2-oxoglutarate (alpha-oxoglutarate) across the inner mitochondrial membrane in an electroneutral exchange for malate. Can also exchange 2-oxoglutarate for other dicarboxylic acids such as malonate, succinate, maleate and oxaloacetate, although with lower affinity. Contributes to several metabolic processes, including the malate-aspartate shuttle, the oxoglutarate/isocitrate shuttle, in gluconeogenesis from lactate, and in nitrogen metabolism. Maintains mitochondrial fusion and fission events, and the organization and morphology of cristae. Involved in the regulation of apoptosis. Helps protect from cytotoxic-induced apoptosis by modulating glutathione levels in mitochondria. The polypeptide is Mitochondrial 2-oxoglutarate/malate carrier protein (Slc25a11) (Mus musculus (Mouse)).